The following is a 2261-amino-acid chain: Phospholipid-transporting ATPase ABCA1 (2261 aa).

Cysteine 3 carries S-palmitoyl cysteine lipidation. Asparagine 14 carries N-linked (GlcNAc...) asparagine glycosylation. Residues 22–42 (TCQLLLEVAWPLFIFLILISV) traverse the membrane as a helical segment. The S-palmitoyl cysteine moiety is linked to residue cysteine 23. Residues 43-639 (RLSYPPYEQH…DIFLRVMSRS (597 aa)) lie on the Extracellular side of the membrane. The segment at 69 to 80 (WVQGIICNANNP) is annulus domain 1. Cysteine 75 and cysteine 309 are oxidised to a cystine. N-linked (GlcNAc...) asparagine glycans are attached at residues asparagine 98, asparagine 151, asparagine 161, asparagine 196, asparagine 244, asparagine 292, asparagine 337, and asparagine 349. Residues 368–379 (SRIIWKALKPLL) form an annulus domain 2 region. Residues asparagine 400, asparagine 478, asparagine 489, and asparagine 521 are each glycosylated (N-linked (GlcNAc...) asparagine). The interval 564-594 (ERTNKIKDGYWDPGPRADPFEDMRYVWGGFA) is gateway domain. 5 helical membrane passes run 640-660 (MPLF…KSIV), 683-703 (FSWF…LVVI), 716-736 (SVVF…CFLI), 745-765 (LAAA…VLCV), and 777-797 (IFAS…FALF). Residue asparagine 820 is glycosylated (N-linked (GlcNAc...) asparagine). The helical transmembrane segment at 827–847 (MMLFDTFLYGVMTWYIEAVFP) threads the bilayer. The 233-residue stretch at 899-1131 (VSIQNLVKVY…LGTGYYLTLV (233 aa)) folds into the ABC transporter 1 domain. 933–940 (GHNGAGKT) provides a ligand contact to ATP. Residues 941–961 (TTMSILTGLFPPTSGTAYILG) traverse the membrane as a helical segment. Serine 1042 bears the Phosphoserine; by PKA mark. S-palmitoyl cysteine attachment occurs at residues cysteine 1110 and cysteine 1111. Residues asparagine 1144 and asparagine 1294 are each glycosylated (N-linked (GlcNAc...) asparagine). The disordered stretch occupies residues 1285 to 1310 (FTEDDAVDPNDSDIDPESRETDLLSG). Over residues 1287–1299 (EDDAVDPNDSDID) the composition is skewed to acidic residues. Serine 1296 carries the post-translational modification Phosphoserine. A helical transmembrane segment spans residues 1351-1371 (IVLPAVFVCIALVFSLIVPPF). At 1372-1656 (GKYPSLELQP…ALMTTSVDVL (285 aa)) the chain is on the extracellular side. N-linked (GlcNAc...) asparagine glycosylation is present at asparagine 1453. A disulfide bridge links cysteine 1463 with cysteine 1477. 3 N-linked (GlcNAc...) asparagine glycosylation sites follow: asparagine 1499, asparagine 1504, and asparagine 1637. Transmembrane regions (helical) follow at residues 1657–1677 (VSIC…VFLI), 1703–1723 (FVWD…IFIC), 1735–1755 (LPVL…LMYP), 1768–1788 (VVLT…TFVL), 1802–1822 (ILKS…LIDM), and 1852–1872 (NLFA…LIQY). In terms of domain architecture, ABC transporter 2 spans 1912 to 2144 (LEIKELTKIY…FGDGYTIVVR (233 aa)). 1946-1953 (GVNGAGKS) contacts ATP. N-linked (GlcNAc...) asparagine glycosylation is present at asparagine 2044. Serine 2054 carries the phosphoserine; by PKA modification. The N-linked (GlcNAc...) asparagine glycan is linked to asparagine 2238.

Belongs to the ABC transporter superfamily. ABCA family. As to quaternary structure, interacts with MEGF10. May interact with APOE1; functionally associated with APOE1 in the biogenesis of HDLs. Interacts with ABCA8; this interaction potentiates cholesterol efflux. Interacts with ABCA12 and NR1H2; this interaction is required for ABCA1 localization to the cell surface and is necessary for its normal activity and stability. In terms of processing, phosphorylation on Ser-2054 regulates phospholipid efflux. Palmitoylated by ZDHHC8. Palmitoylation is essential for localization to the plasma membrane. As to expression, widely expressed in adult tissues. Highest levels are found in pregnant uterus and uterus.

Its subcellular location is the cell membrane. The protein resides in the endosome. The enzyme catalyses ATP + H2O + phospholipidSide 1 = ADP + phosphate + phospholipidSide 2.. The catalysed reaction is a 1,2-diacyl-sn-glycero-3-phosphocholine(out) + ATP + H2O = a 1,2-diacyl-sn-glycero-3-phosphocholine(in) + ADP + phosphate + H(+). It carries out the reaction a 1,2-diacyl-sn-glycero-3-phospho-L-serine(out) + ATP + H2O = a 1,2-diacyl-sn-glycero-3-phospho-L-serine(in) + ADP + phosphate + H(+). It catalyses the reaction a sphingomyelin(in) + ATP + H2O = a sphingomyelin(out) + ADP + phosphate + H(+). The enzyme catalyses cholesterol(in) + ATP + H2O = cholesterol(out) + ADP + phosphate + H(+). With respect to regulation, ATPase activity is decreased by cholesterol and ceramide. ATPase activity is stimulated by phosphatidylcholine and to a lesser degree by phosphatidylserine and sphingomyelin. Phospholipid translocase activity is highly reduced by berylium fluoride and aluminum flouride and reduced by N-ethylmaleimide. Its function is as follows. Catalyzes the translocation of specific phospholipids from the cytoplasmic to the extracellular/lumenal leaflet of membrane coupled to the hydrolysis of ATP. Thereby, participates in phospholipid transfer to apolipoproteins to form nascent high density lipoproteins/HDLs. Transports preferentially phosphatidylcholine over phosphatidylserine. May play a similar role in the efflux of intracellular cholesterol to apolipoproteins and the formation of nascent high density lipoproteins/HDLs. Translocates phospholipids from the outer face of the plasma membrane and forces it through its gateway and annulus into an elongated hydrophobic tunnel in its extracellular domain. The sequence is that of Phospholipid-transporting ATPase ABCA1 from Mus musculus (Mouse).